Here is a 334-residue protein sequence, read N- to C-terminus: Ornithine carbamoyltransferase subunit I (334 aa).

Residues 56-59 (STRT), Q83, R107, and 134-137 (HPTQ) each bind carbamoyl phosphate. L-ornithine-binding positions include N168, D232, and 236-237 (SM). C274 provides a ligand contact to Zn(2+). Carbamoyl phosphate is bound by residues 274-275 (CL) and R320.

This sequence belongs to the aspartate/ornithine carbamoyltransferase superfamily. OTCase family. In terms of assembly, in E.coli strain K12, trimer of identical or non-identical chains are composed of ArgI (I) and/or ArgF (F). The trimer has the following composition: FFI, FFF, FII, III. E.coli strains B and W, which are known to contain only ArgI, produce only a trimer of identical chains (III).

The protein resides in the cytoplasm. It catalyses the reaction carbamoyl phosphate + L-ornithine = L-citrulline + phosphate + H(+). Its pathway is amino-acid biosynthesis; L-arginine biosynthesis; L-arginine from L-ornithine and carbamoyl phosphate: step 1/3. Its activity is regulated as follows. Reversely inhibited by N-(N-Sulfodiaminophosphinyl)-L-ornithine. Zinc is an allosteric regulator of the substrate-bound enzyme and a competitive inhibitor of the free enzyme. Reversibly catalyzes the transfer of the carbamoyl group from carbamoyl phosphate (CP) to the N(epsilon) atom of ornithine (ORN) to produce L-citrulline, which is a substrate for argininosuccinate synthetase, the enzyme involved in the final step in arginine biosynthesis. The chain is Ornithine carbamoyltransferase subunit I from Escherichia coli (strain K12).